A 99-amino-acid polypeptide reads, in one-letter code: UPF0235 protein PM1313 (99 aa).

The protein belongs to the UPF0235 family.

The chain is UPF0235 protein PM1313 from Pasteurella multocida (strain Pm70).